The chain runs to 327 residues: Autoinducer 2 import system permease protein LsrD (327 aa).

Transmembrane regions (helical) follow at residues 3–23 (LNWE…FGAI), 41–61 (ICIG…GIDI), 63–83 (LGST…FGLP), 86–106 (LAVP…AALI), 114–134 (LVIT…LSGL), 158–178 (VLGL…FWLI), 211–231 (ALYG…VSYF), 257–277 (IYGG…VGYL), and 283–303 (MVGI…VVVV).

This sequence belongs to the binding-protein-dependent transport system permease family. AraH/RbsC subfamily. As to quaternary structure, the complex is composed of two ATP-binding proteins (LsrA), two transmembrane proteins (LsrC and LsrD) and a solute-binding protein (LsrB).

Its subcellular location is the cell inner membrane. Functionally, part of the ABC transporter complex LsrABCD involved in autoinducer 2 (AI-2) import. Probably responsible for the translocation of the substrate across the membrane. The protein is Autoinducer 2 import system permease protein LsrD (lsrD) of Enterobacter sp. (strain 638).